The primary structure comprises 484 residues: Glycogen synthase (484 aa).

Lys15 contributes to the ADP-alpha-D-glucose binding site.

The protein belongs to the glycosyltransferase 1 family. Bacterial/plant glycogen synthase subfamily.

The enzyme catalyses [(1-&gt;4)-alpha-D-glucosyl](n) + ADP-alpha-D-glucose = [(1-&gt;4)-alpha-D-glucosyl](n+1) + ADP + H(+). Its pathway is glycan biosynthesis; glycogen biosynthesis. In terms of biological role, synthesizes alpha-1,4-glucan chains using ADP-glucose. This Koribacter versatilis (strain Ellin345) protein is Glycogen synthase.